Reading from the N-terminus, the 228-residue chain is 5'-methylthioadenosine/S-adenosylhomocysteine nucleosidase (228 aa).

The active-site Proton acceptor is Glu11. Residues Gly77, Ile151, and 172–173 (ME) each bind substrate. Asp196 serves as the catalytic Proton donor.

This sequence belongs to the PNP/UDP phosphorylase family. MtnN subfamily.

The catalysed reaction is S-adenosyl-L-homocysteine + H2O = S-(5-deoxy-D-ribos-5-yl)-L-homocysteine + adenine. It carries out the reaction S-methyl-5'-thioadenosine + H2O = 5-(methylsulfanyl)-D-ribose + adenine. It catalyses the reaction 5'-deoxyadenosine + H2O = 5-deoxy-D-ribose + adenine. The protein operates within amino-acid biosynthesis; L-methionine biosynthesis via salvage pathway; S-methyl-5-thio-alpha-D-ribose 1-phosphate from S-methyl-5'-thioadenosine (hydrolase route): step 1/2. Its function is as follows. Catalyzes the irreversible cleavage of the glycosidic bond in both 5'-methylthioadenosine (MTA) and S-adenosylhomocysteine (SAH/AdoHcy) to adenine and the corresponding thioribose, 5'-methylthioribose and S-ribosylhomocysteine, respectively. Also cleaves 5'-deoxyadenosine, a toxic by-product of radical S-adenosylmethionine (SAM) enzymes, into 5-deoxyribose and adenine. The protein is 5'-methylthioadenosine/S-adenosylhomocysteine nucleosidase of Staphylococcus aureus (strain MRSA252).